The following is a 465-amino-acid chain: Cruciferin CRU4 (465 aa).

Residues 1–22 (MGPTSLLSFFFTFLTLFHGFTA) form the signal peptide. Intrachain disulfides connect cysteine 29-cysteine 62 and cysteine 105-cysteine 283. Cupin type-1 domains follow at residues 34–236 (LNAL…ETAQ) and 289–438 (ENLD…QEAR). Threonine 108 carries the phosphothreonine modification. The tract at residues 112-135 (SPVFGQGQGQEQGQGQGQGQGQGF) is disordered. Over residues 117-133 (QGQGQEQGQGQGQGQGQ) the composition is skewed to gly residues. Tyrosine 306 is subject to Phosphotyrosine. Residues serine 308 and serine 443 each carry the phosphoserine modification.

It belongs to the 11S seed storage protein (globulins) family. As to quaternary structure, heterohexamer; each subunit is composed of an acidic and a basic chain derived from a single precursor and linked by a disulfide bond.

It is found in the rough endoplasmic reticulum. Functionally, this is a seed storage protein. In Brassica napus (Rape), this protein is Cruciferin CRU4 (CRU4).